The primary structure comprises 283 residues: Ubiquinone biosynthesis protein COQ4, mitochondrial (283 aa).

Residues 1-25 (MAIAKSVRARAVGLRSLRVLCAQRS) constitute a mitochondrion transit peptide. Residues histidine 166, aspartate 167, histidine 170, and glutamate 182 each contribute to the Zn(2+) site.

Belongs to the COQ4 family. As to quaternary structure, component of a multi-subunit COQ enzyme complex, composed of at least COQ3, COQ4, COQ5, COQ6, COQ7 and COQ9. Zn(2+) is required as a cofactor.

The protein localises to the mitochondrion inner membrane. It catalyses the reaction a 4-hydroxy-3-methoxy-5-(all-trans-polyprenyl)benzoate + H(+) = a 2-methoxy-6-(all-trans-polyprenyl)phenol + CO2. It functions in the pathway cofactor biosynthesis; ubiquinone biosynthesis. Functionally, lyase that catalyzes the C1-decarboxylation of 4-hydroxy-3-methoxy-5-(all-trans-polyprenyl)benzoic acid into 2-methoxy-6-(all-trans-polyprenyl)phenol during ubiquinone biosynthesis. In Coccidioides immitis (strain RS) (Valley fever fungus), this protein is Ubiquinone biosynthesis protein COQ4, mitochondrial.